Reading from the N-terminus, the 205-residue chain is Beta-crystallin B2 (205 aa).

At Ala-2 the chain carries N-acetylalanine. The interval Ala-2–Asn-16 is N-terminal arm. Beta/gamma crystallin 'Greek key' domains follow at residues Pro-17–Ala-56 and Gly-57–Lys-101. The segment at Val-102 to Glu-106 is connecting peptide. Beta/gamma crystallin 'Greek key' domains are found at residues His-107–Ser-148 and Gly-149–Arg-191. The interval Met-193 to Ser-205 is C-terminal arm.

Belongs to the beta/gamma-crystallin family. Homo/heterodimer, or complexes of higher-order. The structure of beta-crystallin oligomers seems to be stabilized through interactions between the N-terminal arms.

In terms of biological role, crystallins are the dominant structural components of the vertebrate eye lens. This is Beta-crystallin B2 (CRYBB2) from Mesocricetus auratus (Golden hamster).